The chain runs to 140 residues: UPF0654 protein C22G7.11c (140 aa).

2 disordered regions span residues 1-88 (MPDP…DPMK) and 110-140 (YKAT…ETQA). A compositionally biased stretch (basic and acidic residues) spans 24–33 (AKERAEDYIE). Over residues 34-44 (SHSSGQETGDY) the composition is skewed to polar residues. The span at 54–71 (DYEDLGDYDEDADFDNEE) shows a compositional bias: acidic residues.

The protein belongs to the UPF0654 (con-6) family.

This chain is UPF0654 protein C22G7.11c, found in Schizosaccharomyces pombe (strain 972 / ATCC 24843) (Fission yeast).